Here is a 517-residue protein sequence, read N- to C-terminus: Type II methyltransferase M.CeqI (517 aa).

Disordered stretches follow at residues 1–21 (MVVT…RWPR) and 33–62 (GRPR…HGRS). A compositionally biased stretch (basic residues) spans 51–62 (RPRRGRAPHGRS). TPR repeat units lie at residues 283–316 (AEFY…FENN), 361–394 (ALLL…GDHS), and 476–509 (SELA…RTNM).

The catalysed reaction is a 2'-deoxyadenosine in DNA + S-adenosyl-L-methionine = an N(6)-methyl-2'-deoxyadenosine in DNA + S-adenosyl-L-homocysteine + H(+). Its function is as follows. A methylase, recognizes the double-stranded sequence 5'-GATATC-3', methylates A-? on both strands, and protects the DNA from cleavage by the CeqI endonuclease. This is Type II methyltransferase M.CeqI (ceqIM) from Rhodococcus hoagii (Corynebacterium equii).